We begin with the raw amino-acid sequence, 360 residues long: MSLQRISIESFRNIAAANLLPSEGLNLIYGHNGSGKTSVLEAIYFLGMGRSFRSHLSQRVIRHDEDKLTLFAQLSHHNGESKVGLRRHRNGEIEVKIDGDRVKRLSTLAETLPIQVITPESFSLLFEGPKARRQFVDWGAFHSDEQFYTAWSNVKRILKQRNQLLRNGSSYGNILFWDKELVRYAEQVTQIRNHYVDSLNELLKGIIEEFLPQVNISISFTRGWDSKTDLALLLESQYSRDLATGHTVSGPHKADLRLRVGNLPVQDALSRGQLKLLVCALRIAQGKLLKQQKDKQSIYLVDDLPSELDAQHRQLLLKQLTETGAQIFVTAIEPAAIVDSLASPPNKVFHVEQGRVTVIE.

An ATP-binding site is contributed by 30-37 (GHNGSGKT).

The protein belongs to the RecF family.

It localises to the cytoplasm. In terms of biological role, the RecF protein is involved in DNA metabolism; it is required for DNA replication and normal SOS inducibility. RecF binds preferentially to single-stranded, linear DNA. It also seems to bind ATP. The polypeptide is DNA replication and repair protein RecF (Shewanella denitrificans (strain OS217 / ATCC BAA-1090 / DSM 15013)).